Here is an 87-residue protein sequence, read N- to C-terminus: UPF0250 protein Ent638_1166 (87 aa).

It belongs to the UPF0250 family.

The chain is UPF0250 protein Ent638_1166 from Enterobacter sp. (strain 638).